Consider the following 297-residue polypeptide: Band 7 protein AAEL010189 (297 aa).

Polar residues predominate over residues Met1–Pro13. The segment at Met1–Glu30 is disordered. The chain crosses the membrane as a helical span at residues Ile37 to Cys57.

Belongs to the band 7/mec-2 family.

Its subcellular location is the membrane. This chain is Band 7 protein AAEL010189, found in Aedes aegypti (Yellowfever mosquito).